The following is a 731-amino-acid chain: Bifunctional trehalose-6-phosphate synthase/phosphatase (731 aa).

The tract at residues 1–464 is alpha,alpha-trehalose-phosphate synthase; that stretch reads MRLIVVSNRL…WGTDFIYSLI (464 aa). Arg-9 is a binding site for D-glucose 6-phosphate. 25 to 26 is a UDP-alpha-D-glucose binding site; the sequence is GG. D-glucose 6-phosphate is bound by residues Tyr-89 and Asp-143. 2 residues coordinate UDP-alpha-D-glucose: Arg-276 and Lys-281. D-glucose 6-phosphate is bound at residue Arg-314. Residue 379–383 coordinates UDP-alpha-D-glucose; it reads LVAKE. A trehalose-6-phosphate phosphatase region spans residues 465–731; sequence SAKSAREEVE…RSLLEQLRPP (267 aa). Asp-503 serves as the catalytic Nucleophile. 3 residues coordinate Mg(2+): Asp-503, Asp-505, and Asp-684. Alpha,alpha-trehalose 6-phosphate is bound at residue 503-505; sequence DYD.

It in the N-terminal section; belongs to the glycosyltransferase 20 family. This sequence in the C-terminal section; belongs to the trehalose phosphatase family. As to quaternary structure, may interact with the putative glycosyltransferase (GT) TTX_1305. TTX_1305 is required for the trehalose-6-phosphate synthase activity of tpsp. Requires Mg(2+) as cofactor.

The catalysed reaction is D-glucose 6-phosphate + UDP-alpha-D-glucose = alpha,alpha-trehalose 6-phosphate + UDP + H(+). The enzyme catalyses alpha,alpha-trehalose 6-phosphate + H2O = alpha,alpha-trehalose + phosphate. Its pathway is glycan biosynthesis; trehalose biosynthesis. In terms of biological role, bifunctional enzyme which catalyzes the transfer of glucose from UDP-alpha-D-glucose to glucose-6-phosphate to form trehalose-6-phosphate (Tre6P) and removes the phosphate from Tre6P to produce free trehalose. In Thermoproteus tenax (strain ATCC 35583 / DSM 2078 / JCM 9277 / NBRC 100435 / Kra 1), this protein is Bifunctional trehalose-6-phosphate synthase/phosphatase.